We begin with the raw amino-acid sequence, 34 residues long: Antimicrobial peptide Alo-2 (34 aa).

Disulfide bonds link C1-C18, C8-C22, and C17-C33.

It is found in the secreted. In terms of biological role, has antifungal activity against C.glabrata. This chain is Antimicrobial peptide Alo-2, found in Acrocinus longimanus (Giant harlequin beetle).